The chain runs to 155 residues: Protein archease-like (155 aa).

Residues Asp-26, Asp-154, and Ile-155 each coordinate Ca(2+).

It belongs to the archease family.

Functionally, component of the tRNA-splicing ligase complex required to facilitate the enzymatic turnover of catalytic subunit RtcB (F16A11.2). The protein is Protein archease-like of Caenorhabditis elegans.